The primary structure comprises 121 residues: Ribosome-binding factor A (121 aa).

The protein belongs to the RbfA family. In terms of assembly, monomer. Binds 30S ribosomal subunits, but not 50S ribosomal subunits or 70S ribosomes.

Its subcellular location is the cytoplasm. One of several proteins that assist in the late maturation steps of the functional core of the 30S ribosomal subunit. Associates with free 30S ribosomal subunits (but not with 30S subunits that are part of 70S ribosomes or polysomes). Required for efficient processing of 16S rRNA. May interact with the 5'-terminal helix region of 16S rRNA. The protein is Ribosome-binding factor A of Paraburkholderia phytofirmans (strain DSM 17436 / LMG 22146 / PsJN) (Burkholderia phytofirmans).